An 84-amino-acid polypeptide reads, in one-letter code: Delta-thalatoxin-Cad1a (84 aa).

The signal sequence occupies residues 1-19; that stretch reads MAYLKIVLVALMLVLAVSA. Residues 20–33 constitute a propeptide that is removed on maturation; that stretch reads MRRPDQQDQDISVA. Intrachain disulfides connect Cys-38–Cys-78, Cys-40–Cys-68, and Cys-61–Cys-79.

The protein belongs to the sea anemone sodium channel inhibitory toxin family. Type II subfamily.

The protein resides in the secreted. It is found in the nematocyst. Its function is as follows. Binds specifically to the voltage-gated sodium channel (Nav) and delays its inactivation. This Cryptodendrum adhaesivum (Adhesive sea anemone) protein is Delta-thalatoxin-Cad1a.